Consider the following 380-residue polypeptide: MAPNIRKSHPLLKMINNSLIDLPSPSNISAWWNFGSLLGICLTTQILTGLLLAMHYTADTTLAFSSVAHTCRNVQYGWLIRNLHANGASFFFICIYLHIGRGFYYGSYLHKETWNTGVILLLTLMATAFVGYVLPWGQMSFWGATVITNLFSAIPYIGQTLVEWAWGGFSVDNPTLTRFFALHFLLPFMIAGLTTIHLTFLHESGSNNPLGITSNCDKIPFHPYFTLKDILGFTLMLLPLTTLALFSPNLLGDPENFTPANPLITPPHIKPEWYFLFAYAILRSIPNKLGGVLALAASVLILFLIPFLHKAKQRTMTFRPISQLLFWILVTNLLILTWVGSQPVEHPFIIIGQLASITYFTILLVLFPITEALENKMLNY.

Transmembrane regions (helical) follow at residues 34-54 (FGSLLGICLTTQILTGLLLAM), 78-99 (WLIRNLHANGASFFFICIYLHI), 114-134 (WNTGVILLLTLMATAFVGYVL), and 179-199 (FFALHFLLPFMIAGLTTIHLT). Residues His84 and His98 each coordinate heme b. Heme b-binding residues include His183 and His197. His202 is a binding site for a ubiquinone. The next 4 helical transmembrane spans lie at 227–247 (LKDILGFTLMLLPLTTLALFS), 289–309 (LGGVLALAASVLILFLIPFLH), 321–341 (ISQLLFWILVTNLLILTWVGS), and 348–368 (FIIIGQLASITYFTILLVLFP).

The protein belongs to the cytochrome b family. In terms of assembly, the cytochrome bc1 complex contains 11 subunits: 3 respiratory subunits (MT-CYB, CYC1 and UQCRFS1), 2 core proteins (UQCRC1 and UQCRC2) and 6 low-molecular weight proteins (UQCRH/QCR6, UQCRB/QCR7, UQCRQ/QCR8, UQCR10/QCR9, UQCR11/QCR10 and a cleavage product of UQCRFS1). This cytochrome bc1 complex then forms a dimer. It depends on heme b as a cofactor.

It is found in the mitochondrion inner membrane. Its function is as follows. Component of the ubiquinol-cytochrome c reductase complex (complex III or cytochrome b-c1 complex) that is part of the mitochondrial respiratory chain. The b-c1 complex mediates electron transfer from ubiquinol to cytochrome c. Contributes to the generation of a proton gradient across the mitochondrial membrane that is then used for ATP synthesis. The sequence is that of Cytochrome b (MT-CYB) from Pelecanoides georgicus (South Georgia diving petrel).